We begin with the raw amino-acid sequence, 271 residues long: Serine O-acetyltransferase (271 aa).

Residue Cys-112 is the Acyl-thioester intermediate of the active site. His-204 acts as the Proton acceptor in catalysis. Glu-206 is an active-site residue.

It belongs to the MetA family.

It catalyses the reaction L-serine + acetyl-CoA = O-acetyl-L-serine + CoA. It participates in amino-acid biosynthesis; L-cysteine biosynthesis; L-cysteine from L-serine: step 1/2. Functionally, catalyzes the formation of O-acetylserine (OAS) from L-serine and acetyl-CoA. To a lesser extent, is also able to use succinyl-CoA and propionyl-CoA as acyl donors, but not butyryl-CoA. Does not acylate D-serine and L-homoserine. The chain is Serine O-acetyltransferase from Lacticaseibacillus casei (Lactobacillus casei).